The chain runs to 229 residues: Protein GLC8 (229 aa).

Disordered regions lie at residues 1–21 (MGGILKNPLALSPEQLAQQDP), 35–62 (TQKNAKLTSHKRNIPGLDNTKEEGEIIG), and 107–229 (QFQD…TKEP). S12 bears the Phosphoserine mark. Positions 107-117 (QFQDIHIDEPK) are enriched in basic and acidic residues. At T118 the chain carries Phosphothreonine; by PHO85. Phosphoserine is present on S158. Positions 164-173 (FEIKENKQPD) are enriched in basic and acidic residues. Positions 175-184 (ETNDENDEDS) are enriched in acidic residues. At S184 the chain carries Phosphoserine. Over residues 185–196 (PEARHKKFEEMR) the composition is skewed to basic and acidic residues.

In terms of processing, phosphorylated by the cyclin-CDKs PCL6-PHO85 and PCL7-PHO85. Phosphorylation of Thr-118 inactivates GLC8.

Its function is as follows. Modulator of GLC7 type-1 protein phosphatase. The protein is Protein GLC8 (GLC8) of Saccharomyces cerevisiae (strain ATCC 204508 / S288c) (Baker's yeast).